The primary structure comprises 214 residues: 3-isopropylmalate dehydratase small subunit (214 aa).

Belongs to the LeuD family. LeuD type 1 subfamily. In terms of assembly, heterodimer of LeuC and LeuD.

The catalysed reaction is (2R,3S)-3-isopropylmalate = (2S)-2-isopropylmalate. The protein operates within amino-acid biosynthesis; L-leucine biosynthesis; L-leucine from 3-methyl-2-oxobutanoate: step 2/4. Its function is as follows. Catalyzes the isomerization between 2-isopropylmalate and 3-isopropylmalate, via the formation of 2-isopropylmaleate. The protein is 3-isopropylmalate dehydratase small subunit of Pseudomonas putida (strain ATCC 47054 / DSM 6125 / CFBP 8728 / NCIMB 11950 / KT2440).